Here is a 133-residue protein sequence, read N- to C-terminus: Putative nickel-responsive regulator (133 aa).

H74, H85, H87, and C93 together coordinate Ni(2+).

This sequence belongs to the transcriptional regulatory CopG/NikR family. Ni(2+) serves as cofactor.

Its function is as follows. Transcriptional regulator. The polypeptide is Putative nickel-responsive regulator (Saccharolobus islandicus (strain Y.N.15.51 / Yellowstone #2) (Sulfolobus islandicus)).